The following is a 296-amino-acid chain: NH(3)-dependent NAD(+) synthetase (296 aa).

ATP is bound at residue 30-37 (GVSGGLDS). Asp-36 is a Mg(2+) binding site. Arg-157 contacts deamido-NAD(+). Mg(2+) is bound at residue Glu-182. Residues Lys-190 and Asp-197 each contribute to the deamido-NAD(+) site. Positions 206 and 228 each coordinate ATP.

Belongs to the NAD synthetase family. As to quaternary structure, homodimer.

The enzyme catalyses deamido-NAD(+) + NH4(+) + ATP = AMP + diphosphate + NAD(+) + H(+). Its pathway is cofactor biosynthesis; NAD(+) biosynthesis; NAD(+) from deamido-NAD(+) (ammonia route): step 1/1. Its function is as follows. Catalyzes the ATP-dependent amidation of deamido-NAD to form NAD. Uses ammonia as a nitrogen source. The sequence is that of NH(3)-dependent NAD(+) synthetase from Coprothermobacter proteolyticus (strain ATCC 35245 / DSM 5265 / OCM 4 / BT).